Consider the following 1240-residue polypeptide: Neurofascin (1240 aa).

A signal peptide spans Met-1–Ala-24. Over Ile-25–Trp-1110 the chain is Extracellular. 6 Ig-like C2-type domains span residues Pro-41–Ser-137, Pro-143–Thr-230, Pro-244–Arg-332, Pro-337–Ser-424, Pro-430–Glu-517, and Pro-521–Ala-603. 4 disulfide bridges follow: Cys-63–Cys-118, Cys-162–Cys-213, Cys-268–Cys-316, and Cys-358–Cys-408. Asn-305 carries N-linked (GlcNAc...) asparagine glycosylation. Asn-409 and Asn-446 each carry an N-linked (GlcNAc...) asparagine glycan. Disulfide bonds link Cys-452/Cys-501 and Cys-543/Cys-592. A Phosphotyrosine modification is found at Tyr-481. Asn-483 carries N-linked (GlcNAc...) asparagine glycosylation. Ser-485 is subject to Phosphoserine. Fibronectin type-III domains lie at Arg-630–Ala-725, Pro-727–Asp-823, Ala-827–Ala-923, and Ala-1007–Thr-1099. Residues Ser-710–Arg-740 form a disordered region. N-linked (GlcNAc...) asparagine glycans are attached at residues Asn-752, Asn-778, Asn-866, and Asn-881. The tract at residues Ala-902–Leu-942 is disordered. The segment covering Gly-907–Ser-916 has biased composition (low complexity). The segment covering Pro-917 to Pro-933 has biased composition (pro residues). Residues Phe-1111 to Ile-1131 form a helical membrane-spanning segment. Topologically, residues Lys-1132–Ala-1240 are cytoplasmic. A disordered region spans residues Val-1141–Ala-1240. The span at Pro-1154 to Asp-1165 shows a compositional bias: acidic residues. Residues Ser-1160, Ser-1174, Ser-1187, Ser-1190, Ser-1226, Ser-1227, and Ser-1231 each carry the phosphoserine modification. A compositionally biased stretch (polar residues) spans Leu-1171–Gln-1184.

This sequence belongs to the immunoglobulin superfamily. L1/neurofascin/NgCAM family. As to quaternary structure, horseshoe-shaped homodimer. Probable constituent of a NFASC/NRCAM/ankyrin-G complex. Associates with the sodium channel beta-1 (SCN1B) and beta-3 (SCN3B) subunits. Interacts with GLDN/gliomedin. Interacts with MYOC.

It localises to the cell membrane. Its function is as follows. Cell adhesion, ankyrin-binding protein which may be involved in neurite extension, axonal guidance, synaptogenesis, myelination and neuron-glial cell interactions. The polypeptide is Neurofascin (Nfasc) (Mus musculus (Mouse)).